We begin with the raw amino-acid sequence, 49 residues long: Small ribosomal subunit protein eS31 (49 aa).

Residues Cys-21, Cys-24, Cys-39, and Cys-42 each coordinate Zn(2+). The C4-type zinc finger occupies 21 to 42 (CPRCGPGTFLADHKNRLTCGKC).

The protein belongs to the eukaryotic ribosomal protein eS31 family. Part of the 30S ribosomal subunit. Zn(2+) is required as a cofactor.

The protein is Small ribosomal subunit protein eS31 of Methanosarcina barkeri (strain Fusaro / DSM 804).